Consider the following 275-residue polypeptide: Membrane protein insertase MisCB (275 aa).

The signal sequence occupies residues 1–18 (MLKTYQKLLAMGIFLIVL). Cys19 is lipidated: N-palmitoyl cysteine. Cys19 carries the S-diacylglycerol cysteine lipid modification. The next 5 membrane-spanning stretches (helical) occupy residues 63–83 (YGLSIILVTIIVRIVVLPLFV), 139–159 (AMGCLPMLIQSPIMIGLYYAI), 172–192 (WFSLGQSDILMSLSAGIMYFV), 219–239 (LMVFIFPVMMTIFSLNVPAAL), and 240–260 (PLYWFTSGLFLTVQNIVLQMT).

This sequence belongs to the OXA1/ALB3/YidC family. Type 2 subfamily. Mostly monomeric, it may also form dimers. Interacts with SpoIIIAE. Forms a complex with the F(1)F(0) ATP synthase in which can be found the alpha, beta, gamma, delta and epsilon subunits of F(1) and a, b and subunits of F(0). YqgA is found in the same complex.

Its subcellular location is the cell membrane. In terms of biological role, required for the insertion and/or proper folding and/or complex formation of integral membrane proteins into the membrane. Involved in integration of membrane proteins that insert both dependently and independently of the Sec translocase complex, as well as at least some lipoproteins. Also involved in protein secretion processes. It has an overlapping, although partly distinct, function compared to SpoIIIJ(MisCB). In Bacillus subtilis (strain 168), this protein is Membrane protein insertase MisCB (misCB).